We begin with the raw amino-acid sequence, 493 residues long: Glutamate--tRNA ligase (493 aa).

The 'HIGH' region signature appears at 10–20; the sequence is PSPTGTPHVGL. Residues 254 to 258 carry the 'KMSKS' region motif; that stretch reads KLSKR. Lys-257 lines the ATP pocket.

Belongs to the class-I aminoacyl-tRNA synthetase family. Glutamate--tRNA ligase type 1 subfamily. In terms of assembly, monomer.

It is found in the cytoplasm. It catalyses the reaction tRNA(Glu) + L-glutamate + ATP = L-glutamyl-tRNA(Glu) + AMP + diphosphate. Its function is as follows. Catalyzes the attachment of glutamate to tRNA(Glu) in a two-step reaction: glutamate is first activated by ATP to form Glu-AMP and then transferred to the acceptor end of tRNA(Glu). The sequence is that of Glutamate--tRNA ligase from Corynebacterium glutamicum (strain ATCC 13032 / DSM 20300 / JCM 1318 / BCRC 11384 / CCUG 27702 / LMG 3730 / NBRC 12168 / NCIMB 10025 / NRRL B-2784 / 534).